The following is a 509-amino-acid chain: Bifunctional pantoate ligase/cytidylate kinase (509 aa).

The tract at residues 1 to 275 (MKKLIIRKTE…CGETRLIDHV (275 aa)) is pantoate--beta-alanine ligase. ATP is bound at residue 29-36 (MGNLHDGH). His-36 acts as the Proton donor in catalysis. Position 61 (Gln-61) interacts with (R)-pantoate. Gln-61 contributes to the beta-alanine binding site. 149–152 (GEKD) lines the ATP pocket. Position 155 (Gln-155) interacts with (R)-pantoate. An ATP-binding site is contributed by 186 to 189 (LSSR). The segment at 276 to 509 (FLMKRRPIIA…DKIPKESEIK (234 aa)) is cytidylate kinase.

In the N-terminal section; belongs to the pantothenate synthetase family. The protein in the C-terminal section; belongs to the cytidylate kinase family. Type 1 subfamily.

It is found in the cytoplasm. The catalysed reaction is (R)-pantoate + beta-alanine + ATP = (R)-pantothenate + AMP + diphosphate + H(+). It catalyses the reaction CMP + ATP = CDP + ADP. It carries out the reaction dCMP + ATP = dCDP + ADP. The protein operates within cofactor biosynthesis; (R)-pantothenate biosynthesis; (R)-pantothenate from (R)-pantoate and beta-alanine: step 1/1. Its function is as follows. Catalyzes the condensation of pantoate with beta-alanine in an ATP-dependent reaction via a pantoyl-adenylate intermediate. Functionally, catalyzes the transfer of a phosphate group from ATP to either CMP or dCMP to form CDP or dCDP and ADP, respectively. This is Bifunctional pantoate ligase/cytidylate kinase from Prochlorococcus marinus (strain AS9601).